The primary structure comprises 238 residues: SPEG neighbor protein (238 aa).

The region spanning 29–55 is the IQ domain; it reads QSAAIRIQASYRGHRSRKELREKGPPR. 2 consecutive Ig-like domains span residues 54–143 and 147–236; these read PRVL…ARIL and PTKI…ARVD.

The protein is SPEG neighbor protein of Homo sapiens (Human).